Here is a 626-residue protein sequence, read N- to C-terminus: DNA polymerase 2 (626 aa).

It belongs to the DNA polymerase type-B family.

The catalysed reaction is DNA(n) + a 2'-deoxyribonucleoside 5'-triphosphate = DNA(n+1) + diphosphate. Its function is as follows. This polymerase is devoid of exonuclease activity. The sequence is that of DNA polymerase 2 (dpo2) from Saccharolobus solfataricus (strain ATCC 35092 / DSM 1617 / JCM 11322 / P2) (Sulfolobus solfataricus).